A 209-amino-acid chain; its full sequence is MKKAILGKKLGMTQIFNENGKVIPVTVIEAGPCTVIQKKTVEKDGYEAIQVAFGDIREKLRNKPIKGHFAKAGVSVKRHIKEFKLEDSNSLEIGQEIKADVFEAGERVDISGVSKGKGFQGTIRRWNAHRGPMSHGSKFHRAVGSMGASSDPSRTFKNKRMPGHMGNVNTTVLNLEVVRIIPEKNLILIKGGVPGPNKGLVQIRNTVKA.

A disordered region spans residues 141–163 (RAVGSMGASSDPSRTFKNKRMPG).

This sequence belongs to the universal ribosomal protein uL3 family. As to quaternary structure, part of the 50S ribosomal subunit. Forms a cluster with proteins L14 and L19.

Functionally, one of the primary rRNA binding proteins, it binds directly near the 3'-end of the 23S rRNA, where it nucleates assembly of the 50S subunit. This Clostridium botulinum (strain ATCC 19397 / Type A) protein is Large ribosomal subunit protein uL3.